The following is a 153-amino-acid chain: MKMLKKGTAVLFVMIMAVMLVACGDKEETKTYTLSQNGVDSKLTYTYKGDKVTKQTAENTMSYASLGVASKEDAEKMLKATSDKFQGIDGLKEKIEYKDDKAIETLEVDYTKISSEDMNKIPGMSSNGDTSKGISMEESAKMLESQGYKEVSK.

The N-terminal stretch at 1–22 (MKMLKKGTAVLFVMIMAVMLVA) is a signal peptide. C23 is lipidated: N-palmitoyl cysteine. C23 carries S-diacylglycerol cysteine lipidation. The disordered stretch occupies residues 117–153 (DMNKIPGMSSNGDTSKGISMEESAKMLESQGYKEVSK). The segment covering 124–133 (MSSNGDTSKG) has biased composition (polar residues).

To E.coli YehR.

It localises to the cell membrane. This is an uncharacterized protein from Listeria monocytogenes serovar 1/2a (strain ATCC BAA-679 / EGD-e).